We begin with the raw amino-acid sequence, 411 residues long: Dual-specificity RNA methyltransferase RlmN (411 aa).

E125 functions as the Proton acceptor in the catalytic mechanism. The 250-residue stretch at 131–380 (EEGRGTLCVS…IRTPRGRDIL (250 aa)) folds into the Radical SAM core domain. C138 and C383 are disulfide-bonded. Residues C145, C149, and C152 each contribute to the [4Fe-4S] cluster site. S-adenosyl-L-methionine contacts are provided by residues 209–210 (GE), S241, 263–265 (SLH), and N340. C383 (S-methylcysteine intermediate) is an active-site residue.

The protein belongs to the radical SAM superfamily. RlmN family. The cofactor is [4Fe-4S] cluster.

The protein resides in the cytoplasm. The catalysed reaction is adenosine(2503) in 23S rRNA + 2 reduced [2Fe-2S]-[ferredoxin] + 2 S-adenosyl-L-methionine = 2-methyladenosine(2503) in 23S rRNA + 5'-deoxyadenosine + L-methionine + 2 oxidized [2Fe-2S]-[ferredoxin] + S-adenosyl-L-homocysteine. It catalyses the reaction adenosine(37) in tRNA + 2 reduced [2Fe-2S]-[ferredoxin] + 2 S-adenosyl-L-methionine = 2-methyladenosine(37) in tRNA + 5'-deoxyadenosine + L-methionine + 2 oxidized [2Fe-2S]-[ferredoxin] + S-adenosyl-L-homocysteine. In terms of biological role, specifically methylates position 2 of adenine 2503 in 23S rRNA and position 2 of adenine 37 in tRNAs. m2A2503 modification seems to play a crucial role in the proofreading step occurring at the peptidyl transferase center and thus would serve to optimize ribosomal fidelity. The polypeptide is Dual-specificity RNA methyltransferase RlmN (Brucella anthropi (strain ATCC 49188 / DSM 6882 / CCUG 24695 / JCM 21032 / LMG 3331 / NBRC 15819 / NCTC 12168 / Alc 37) (Ochrobactrum anthropi)).